Reading from the N-terminus, the 139-residue chain is Probable disulfide formation protein C 1 (139 aa).

The chain crosses the membrane as a helical span at residues 8–27 (EYALFTAWGASFIATLGSLY). Cys37 and Cys40 are joined by a disulfide. 2 helical membrane-spanning segments follow: residues 42 to 61 (YQRI…VVKK) and 68 to 85 (YSLP…YHYA). Cysteines 99 and 104 form a disulfide. Residues 113-135 (GFVTIPFLALIGFITIAVCSFIV) form a helical membrane-spanning segment.

The protein belongs to the DsbB family. BdbC subfamily.

The protein localises to the cell membrane. Functionally, required for disulfide bond formation in some proteins. The chain is Probable disulfide formation protein C 1 (bdbC1) from Bacillus cereus (strain ATCC 10987 / NRS 248).